The primary structure comprises 1027 residues: Translation initiation factor IF-2 (1027 aa).

The segment at 31–433 (YVKSASSTVE…GGVRLPRGNG (403 aa)) is disordered. Residues 57–68 (KKGGGDSNGRAG) are compositionally biased toward gly residues. Positions 110-122 (GPKPGPKPGPKAP) are enriched in pro residues. Residues 123–145 (APETKPFEEAPAPAAKADAPAQP) show a composition bias toward low complexity. Over residues 148 to 171 (EQPRSEQPRSEQPRSEQPRSERSG) the composition is skewed to basic and acidic residues. Composition is skewed to pro residues over residues 174-188 (PGGP…PKPG) and 201-212 (PPKPQSPKPGPR). A compositionally biased stretch (gly residues) spans 237-268 (PGGGQRQGGQGPGRGGPQGGRPDRQGGGGQGA). Residues 293–302 (GMMPPRPNPG) are compositionally biased toward pro residues. A compositionally biased stretch (gly residues) spans 311-397 (SGGGPGGGRG…GAAGAFGRPG (87 aa)). The span at 401–410 (RRGRKSKRQK) shows a compositional bias: basic residues. A tr-type G domain is found at 523–695 (SRPPVVTVMG…ILLTADATLD (173 aa)). The interval 532 to 539 (GHVDHGKT) is G1. Position 532 to 539 (532 to 539 (GHVDHGKT)) interacts with GTP. A G2 region spans residues 557–561 (GITQH). The segment at 582 to 585 (DTPG) is G3. Residues 582–586 (DTPGH) and 636–639 (NKID) contribute to the GTP site. Residues 636–639 (NKID) are G4. The G5 stretch occupies residues 672–674 (SAR).

It belongs to the TRAFAC class translation factor GTPase superfamily. Classic translation factor GTPase family. IF-2 subfamily.

Its subcellular location is the cytoplasm. In terms of biological role, one of the essential components for the initiation of protein synthesis. Protects formylmethionyl-tRNA from spontaneous hydrolysis and promotes its binding to the 30S ribosomal subunits. Also involved in the hydrolysis of GTP during the formation of the 70S ribosomal complex. In Saccharopolyspora erythraea (strain ATCC 11635 / DSM 40517 / JCM 4748 / NBRC 13426 / NCIMB 8594 / NRRL 2338), this protein is Translation initiation factor IF-2.